Reading from the N-terminus, the 186-residue chain is Elongation factor P (186 aa).

Belongs to the elongation factor P family.

Its subcellular location is the cytoplasm. It functions in the pathway protein biosynthesis; polypeptide chain elongation. Its function is as follows. Involved in peptide bond synthesis. Stimulates efficient translation and peptide-bond synthesis on native or reconstituted 70S ribosomes in vitro. Probably functions indirectly by altering the affinity of the ribosome for aminoacyl-tRNA, thus increasing their reactivity as acceptors for peptidyl transferase. The polypeptide is Elongation factor P (Prochlorococcus marinus (strain MIT 9215)).